The following is a 202-amino-acid chain: Ras-related protein Rab-2B (202 aa).

31 to 38 is a GTP binding site; it reads GDSAVGKS. The Effector region signature appears at 53–61; it reads SDFTIGVEF. GTP is bound by residues 79–83 and 137–140; these read DTAGQ and NKAD.

Belongs to the small GTPase superfamily. Rab family. This sequence lacks the C-terminal cysteine motifs subject to isoprenylation in other Rab proteins.

The protein is Ras-related protein Rab-2B (rab2B) of Dictyostelium discoideum (Social amoeba).